The chain runs to 423 residues: Autophagy-related protein 18 (423 aa).

4 WD repeats span residues 1–34, 183–223, 228–267, and 367–407; these read MNYV…KIFT, AHRA…KLYQ, TYPS…TGMP, and SRSG…GGEG. A L/FRRG motif motif is present at residues 224-228; that stretch reads FRRGT. Residues 260–320 are disordered; that stretch reads GGPVTGMPES…KSTGTFGSMI (61 aa).

This sequence belongs to the WD repeat PROPPIN family. As to quaternary structure, component of the PI(3,5)P2 regulatory complex.

The protein localises to the preautophagosomal structure membrane. Its subcellular location is the vacuole membrane. The protein resides in the endosome membrane. Functionally, the PI(3,5)P2 regulatory complex regulates both the synthesis and turnover of phosphatidylinositol 3,5-bisphosphate (PtdIns(3,5)P2). Necessary for proper vacuole morphology. Plays an important role in osmotically-induced vacuole fragmentation. Required for cytoplasm to vacuole transport (Cvt) vesicle formation, pexophagy and starvation-induced autophagy. Involved in correct atg9 trafficking to the pre-autophagosomal structure. Might also be involved in premeiotic DNA replication. The chain is Autophagy-related protein 18 (atg18) from Sclerotinia sclerotiorum (strain ATCC 18683 / 1980 / Ss-1) (White mold).